Reading from the N-terminus, the 1603-residue chain is Protein TIC 214 (1603 aa).

6 helical membrane passes run 11 to 31 (VLWA…LFGL), 58 to 78 (LSGT…FLSI), 86 to 106 (LLLK…FYWY), 131 to 151 (IFFD…SPIL), 167 to 187 (LFVL…FNCI), and 213 to 233 (FSIF…VPFF).

Belongs to the TIC214 family. In terms of assembly, part of the Tic complex.

The protein resides in the plastid. It localises to the chloroplast inner membrane. Its function is as follows. Involved in protein precursor import into chloroplasts. May be part of an intermediate translocation complex acting as a protein-conducting channel at the inner envelope. This is Protein TIC 214 from Physcomitrium patens (Spreading-leaved earth moss).